The chain runs to 651 residues: Epithelial sodium channel subunit beta (651 aa).

Residues 1 to 50 (MFLKRWFIRALHRLQKGPGYGYSELFVWYCNNTNTHGPKRLIIEGPKKKT) lie on the Cytoplasmic side of the membrane. A helical membrane pass occupies residues 51-71 (LWSLFTVTFACLVFWQWGLLI). Residues 72–541 (QTYLSWGVSV…GGQFGFWMGG (470 aa)) are Extracellular-facing. Cystine bridges form between C98–C281, C205–C212, C258–C265, C370–C457, C395–C453, C399–C449, C408–C435, and C410–C424. The chain crosses the membrane as a helical span at residues 542–562 (SVLCIIEFGEVFIDCIWIAVI). Over 563–651 (RFVKWYKNRK…TEHHSDSEDL (89 aa)) the chain is Cytoplasmic. Residues 612 to 651 (QPPDLYLPTTLEIPGTPPPKYDSLRVHPIDTEHHSDSEDL) are disordered. Over residues 633–651 (DSLRVHPIDTEHHSDSEDL) the composition is skewed to basic and acidic residues.

Belongs to the amiloride-sensitive sodium channel (TC 1.A.6) family. SCNN1B subfamily. In terms of assembly, component of the heterotrimeric epithelial sodium channel (ENaC) composed of an alpha/SCNN1A, a beta/SCNN1B and a gamma/SCNN1G subunit. As to expression, strongly expressed in gill, kidney and rectum and more weakly in brain, eye, liver and muscle.

Its subcellular location is the apical cell membrane. The protein resides in the cytoplasmic vesicle membrane. It carries out the reaction Na(+)(in) = Na(+)(out). Originally identified and characterized by its inhibition by the diuretic drug amiloride. In terms of biological role, this is one of the three pore-forming subunits of the heterotrimeric epithelial sodium channel (ENaC), a critical regulator of sodium balance and fluid homeostasis. ENaC operates in epithelial tissues, where it mediates the electrodiffusion of sodium ions from extracellular fluid through the apical membrane of cells, with water following osmotically. The protein is Epithelial sodium channel subunit beta of Neoceratodus forsteri (Australian lungfish).